A 187-amino-acid chain; its full sequence is MSDDGEQPGPGDGAARDELSGMDLVRRTLAEARAAARARGQDPGRGFAAGPAPRRVAGRRRSWSGPGPDTRDPQPLGKLTRDLAKKRGWSGHVAEGTVLGQWSRVVGAQIADHATPTALNEGVLSVTAESTAWATQLRIMQSQLLAKIAAAVGNGVVTSLKITGPASPSWRKGPRHIAGRGPRDTYG.

Disordered stretches follow at residues Met-1–Gly-77 and Ala-166–Gly-187. Over residues Ala-14–Ala-30 the composition is skewed to basic and acidic residues. Positions Glu-31–Arg-55 are enriched in low complexity.

It belongs to the UPF0232 family.

In Mycobacterium marinum (strain ATCC BAA-535 / M), this protein is UPF0232 protein MMAR_0004.